The primary structure comprises 329 residues: Ketol-acid reductoisomerase (NADP(+)) (329 aa).

In terms of domain architecture, KARI N-terminal Rossmann spans 2–182; the sequence is TQLFYDTDAD…GGTRAGILET (181 aa). NADP(+)-binding positions include 25 to 28, S51, S53, and 83 to 86; these read YGSQ and DEFQ. The active site involves H108. G134 is an NADP(+) binding site. The KARI C-terminal knotted domain occupies 183–328; the sequence is NFKEETETDL…KGLRSMFSWL (146 aa). Residues D191, E195, E227, and E231 each contribute to the Mg(2+) site. S252 is a substrate binding site.

The protein belongs to the ketol-acid reductoisomerase family. Mg(2+) is required as a cofactor.

It carries out the reaction (2R)-2,3-dihydroxy-3-methylbutanoate + NADP(+) = (2S)-2-acetolactate + NADPH + H(+). The catalysed reaction is (2R,3R)-2,3-dihydroxy-3-methylpentanoate + NADP(+) = (S)-2-ethyl-2-hydroxy-3-oxobutanoate + NADPH + H(+). Its pathway is amino-acid biosynthesis; L-isoleucine biosynthesis; L-isoleucine from 2-oxobutanoate: step 2/4. The protein operates within amino-acid biosynthesis; L-valine biosynthesis; L-valine from pyruvate: step 2/4. Functionally, involved in the biosynthesis of branched-chain amino acids (BCAA). Catalyzes an alkyl-migration followed by a ketol-acid reduction of (S)-2-acetolactate (S2AL) to yield (R)-2,3-dihydroxy-isovalerate. In the isomerase reaction, S2AL is rearranged via a Mg-dependent methyl migration to produce 3-hydroxy-3-methyl-2-ketobutyrate (HMKB). In the reductase reaction, this 2-ketoacid undergoes a metal-dependent reduction by NADPH to yield (R)-2,3-dihydroxy-isovalerate. In Prochlorococcus marinus (strain MIT 9312), this protein is Ketol-acid reductoisomerase (NADP(+)).